Reading from the N-terminus, the 477-residue chain is NADH-quinone oxidoreductase subunit N (477 aa).

The next 13 membrane-spanning stretches (helical) occupy residues 7–27, 37–57, 77–97, 109–129, 162–182, 201–221, 233–253, 272–292, 297–317, 323–343, 369–389, 402–424, and 446–466; these read VLAHALPELILAGGVLLLILI, GPMTELAVGLLGIAILTLVLG, FMKVLVLIGSLVSLIMGQTYL, ILILLSTLGMLMLISATGLIA, FVLGALSSGMLLYGASLIYGF, LGVVFGLVFLTAGLAFKMSTV, GAPTPVTAFFASAPKLAAIAI, IIVFISILSMALGSFAAIGQT, LMAYSSIGHMGFALVGLAAGT, GVLAYMAIYLVMTLGTFAAIL, AFFLAIMMFSLAGIPPLAGFF, HLYPLAVIGVLCSTVGAYYYLRI, and AVLIVTGLAVLLLCVYPGSFV.

Belongs to the complex I subunit 2 family. In terms of assembly, NDH-1 is composed of 14 different subunits. Subunits NuoA, H, J, K, L, M, N constitute the membrane sector of the complex.

The protein localises to the cell inner membrane. It carries out the reaction a quinone + NADH + 5 H(+)(in) = a quinol + NAD(+) + 4 H(+)(out). In terms of biological role, NDH-1 shuttles electrons from NADH, via FMN and iron-sulfur (Fe-S) centers, to quinones in the respiratory chain. The immediate electron acceptor for the enzyme in this species is believed to be ubiquinone. Couples the redox reaction to proton translocation (for every two electrons transferred, four hydrogen ions are translocated across the cytoplasmic membrane), and thus conserves the redox energy in a proton gradient. This chain is NADH-quinone oxidoreductase subunit N, found in Beijerinckia indica subsp. indica (strain ATCC 9039 / DSM 1715 / NCIMB 8712).